The following is a 383-amino-acid chain: Chaperone protein DnaJ (383 aa).

In terms of domain architecture, J spans 6-70 (DYYDVLGVGR…QKRAAYDQYG (65 aa)). Residues 140 to 222 (GKETKISYSR…CHGTGREEER (83 aa)) form a CR-type zinc finger. Residues cysteine 153, cysteine 156, cysteine 170, cysteine 173, cysteine 196, cysteine 199, cysteine 210, and cysteine 213 each coordinate Zn(2+). 4 CXXCXGXG motif repeats span residues 153–160 (CHTCHGSG), 170–177 (CHKCHGAG), 196–203 (CDVCGGTG), and 210–217 (CDTCHGTG).

The protein belongs to the DnaJ family. Homodimer. The cofactor is Zn(2+).

It localises to the cytoplasm. Participates actively in the response to hyperosmotic and heat shock by preventing the aggregation of stress-denatured proteins and by disaggregating proteins, also in an autonomous, DnaK-independent fashion. Unfolded proteins bind initially to DnaJ; upon interaction with the DnaJ-bound protein, DnaK hydrolyzes its bound ATP, resulting in the formation of a stable complex. GrpE releases ADP from DnaK; ATP binding to DnaK triggers the release of the substrate protein, thus completing the reaction cycle. Several rounds of ATP-dependent interactions between DnaJ, DnaK and GrpE are required for fully efficient folding. Also involved, together with DnaK and GrpE, in the DNA replication of plasmids through activation of initiation proteins. The polypeptide is Chaperone protein DnaJ (Latilactobacillus sakei subsp. sakei (strain 23K) (Lactobacillus sakei subsp. sakei)).